Consider the following 135-residue polypeptide: uncharacterized protein (135 aa).

Helical transmembrane passes span 20–40 and 47–67; these read IFSF…NTKL and IAYF…IHGT.

It belongs to the plectrovirus ORF5 family.

The protein localises to the host membrane. This is an uncharacterized protein from Spiroplasma virus SpV1-C74 (SpV1).